Reading from the N-terminus, the 347-residue chain is MKVIKTLSIINFFIFVTFNIKNESKYSNTFINNAYNMSIRRSMAESKPPTGDGAVASAGNGAVASAGNGAVASAGNGAVASAGNGAGNGAGNGAGNGAGNGAGNGAGNGAGNGAGNGAGNGAGNGAGNGAGNGAGNGAGNGAGNGAVASAGNGAGNGAVASAGNGAVAERSSSTPATTTTTTTTNDAEASTSTSSENSNHNNAETNPKGNGEVQPNQANKETQNNSNVQQDSQTKSNVPRTQDADTKSPTAQPEQAENSAPTAEQTESPELQSAPENKGTGQHGHMHGSRNNHPQNTSDSQKECTDGNKENCGAATSLLNNSSNIASINKFVVLISATLVLSFAIFI.

The N-terminal stretch at methionine 1–isoleucine 20 is a signal peptide. N-linked (GlcNAc...) asparagine glycosylation is found at asparagine 22 and asparagine 36. A polymorphic region region spans residues alanine 44–serine 273. 22 tandem repeats follow at residues glycine 53–asparagine 60, glycine 61–asparagine 68, glycine 69–asparagine 76, glycine 77–asparagine 84, glycine 85–asparagine 88, glycine 89–asparagine 92, glycine 93–asparagine 96, glycine 97–asparagine 100, glycine 101–asparagine 104, glycine 105–asparagine 108, glycine 109–asparagine 112, glycine 113–asparagine 116, glycine 117–asparagine 120, glycine 121–asparagine 124, glycine 125–asparagine 128, glycine 129–asparagine 132, glycine 133–asparagine 136, glycine 137–asparagine 140, glycine 141–asparagine 144, glycine 145–asparagine 152, glycine 153–asparagine 156, and glycine 157–asparagine 164. Residues glycine 53–asparagine 164 are 6 X 8 AA repeats of G-A-V-A-S-A-G-N. The tract at residues glycine 85–asparagine 156 is 16 X 4 AA repeats of G-A-G-N. Positions glycine 165 to asparagine 206 are enriched in low complexity. The tract at residues glycine 165–asparagine 308 is disordered. 2 stretches are compositionally biased toward polar residues: residues valine 213–arginine 240 and lysine 247–proline 275. The N-linked (GlcNAc...) asparagine glycan is linked to asparagine 224. Asparagine 296 carries N-linked (GlcNAc...) asparagine glycosylation. An intrachain disulfide couples cysteine 304 to cysteine 312. Asparagine 320 and asparagine 321 each carry an N-linked (GlcNAc...) asparagine glycan. Residue asparagine 321 is the site of GPI-anchor amidated asparagine attachment. Positions serine 322–isoleucine 347 are cleaved as a propeptide — removed in mature form.

The protein resides in the cell membrane. Functionally, may play a role in the merozoite attachment to the erythrocyte. This is Merozoite surface protein 2 from Plasmodium falciparum (isolate Nig32 / Nigeria).